A 278-amino-acid polypeptide reads, in one-letter code: Tryptophan synthase alpha chain (278 aa).

Residues E49 and D60 each act as proton acceptor in the active site.

This sequence belongs to the TrpA family. In terms of assembly, tetramer of two alpha and two beta chains.

It catalyses the reaction (1S,2R)-1-C-(indol-3-yl)glycerol 3-phosphate + L-serine = D-glyceraldehyde 3-phosphate + L-tryptophan + H2O. It functions in the pathway amino-acid biosynthesis; L-tryptophan biosynthesis; L-tryptophan from chorismate: step 5/5. Functionally, the alpha subunit is responsible for the aldol cleavage of indoleglycerol phosphate to indole and glyceraldehyde 3-phosphate. The chain is Tryptophan synthase alpha chain from Granulibacter bethesdensis (strain ATCC BAA-1260 / CGDNIH1).